Consider the following 161-residue polypeptide: 2-C-methyl-D-erythritol 2,4-cyclodiphosphate synthase (161 aa).

A divalent metal cation is bound by residues Asp11 and His13. 4-CDP-2-C-methyl-D-erythritol 2-phosphate contacts are provided by residues 11-13 (DIH) and 37-38 (HS). An a divalent metal cation-binding site is contributed by His45. 4-CDP-2-C-methyl-D-erythritol 2-phosphate contacts are provided by residues 59–61 (DIG) and 135–138 (TTNE).

This sequence belongs to the IspF family. As to quaternary structure, homotrimer. The cofactor is a divalent metal cation.

The enzyme catalyses 4-CDP-2-C-methyl-D-erythritol 2-phosphate = 2-C-methyl-D-erythritol 2,4-cyclic diphosphate + CMP. It participates in isoprenoid biosynthesis; isopentenyl diphosphate biosynthesis via DXP pathway; isopentenyl diphosphate from 1-deoxy-D-xylulose 5-phosphate: step 4/6. Its function is as follows. Involved in the biosynthesis of isopentenyl diphosphate (IPP) and dimethylallyl diphosphate (DMAPP), two major building blocks of isoprenoid compounds. Catalyzes the conversion of 4-diphosphocytidyl-2-C-methyl-D-erythritol 2-phosphate (CDP-ME2P) to 2-C-methyl-D-erythritol 2,4-cyclodiphosphate (ME-CPP) with a corresponding release of cytidine 5-monophosphate (CMP). This is 2-C-methyl-D-erythritol 2,4-cyclodiphosphate synthase from Acaryochloris marina (strain MBIC 11017).